The primary structure comprises 130 residues: MSLMDPLANALNHVSNCESVGKNVAYLKPASKLIGRVLNVMQDQGYIGNFEYIEDGKAGVYKVDLIGQINKCGAVKPRFAVKNHDFEKFEKRYLPAKGFGLLIVSTPKGLMTHDEARNAGVGGRLISYIY.

Belongs to the universal ribosomal protein uS8 family. As to quaternary structure, part of the 30S ribosomal subunit.

Its function is as follows. One of the primary rRNA binding proteins, it binds directly to 16S rRNA central domain where it helps coordinate assembly of the platform of the 30S subunit. The chain is Small ribosomal subunit protein uS8 from Methanococcus maripaludis (strain C7 / ATCC BAA-1331).